The sequence spans 183 residues: Somatotropin (183 aa).

H19 contacts Zn(2+). Residues 38–67 (EEQRHSHKSSPSAFCQSETIPAPTGKEDAQ) are disordered. Residues 46–56 (SSPSAFCQSET) show a composition bias toward polar residues. The cysteines at positions 52 and 156 are disulfide-linked. E165 contributes to the Zn(2+) binding site. The cysteines at positions 173 and 181 are disulfide-linked.

The protein belongs to the somatotropin/prolactin family.

It is found in the secreted. Functionally, growth hormone plays an important role in growth control and is involved in the regulation of several anabolic processes. Implicated as an osmoregulatory substance important for seawater adaptation. The polypeptide is Somatotropin (gh) (Prionace glauca (Blue shark)).